Consider the following 57-residue polypeptide: Putative secreted protein MT0250 (57 aa).

An N-terminal signal peptide occupies residues Met-1 to Gln-32. The disordered stretch occupies residues Lys-34–Ser-57.

In Mycobacterium tuberculosis (strain CDC 1551 / Oshkosh), this protein is Putative secreted protein MT0250.